The primary structure comprises 155 residues: Ribosomal RNA large subunit methyltransferase H (155 aa).

Residues Leu-72, Gly-103, and 122-127 contribute to the S-adenosyl-L-methionine site; that span reads LSDLTL.

The protein belongs to the RNA methyltransferase RlmH family. Homodimer.

It is found in the cytoplasm. It catalyses the reaction pseudouridine(1915) in 23S rRNA + S-adenosyl-L-methionine = N(3)-methylpseudouridine(1915) in 23S rRNA + S-adenosyl-L-homocysteine + H(+). Its function is as follows. Specifically methylates the pseudouridine at position 1915 (m3Psi1915) in 23S rRNA. The polypeptide is Ribosomal RNA large subunit methyltransferase H (Acidovorax ebreus (strain TPSY) (Diaphorobacter sp. (strain TPSY))).